The sequence spans 388 residues: Probable E3 ubiquitin-protein ligase LOG2 (388 aa).

The segment at 1–43 (MGNISSSGGEGRRRRRRNHTAAPPPPPPPPSSSLPPPPLPTEI) is disordered. Residue G2 is the site of N-myristoyl glycine attachment. Pro residues predominate over residues 22–40 (APPPPPPPPSSSLPPPPLP). Residues 159-281 (FTFDATVSGR…GEIKIRVVKQ (123 aa)) are DAR2 domain. The RING-type; atypical zinc finger occupies 319–358 (CVICLSEPRDTTVLPCRHMCMCSGCAKVLRFQTNRCPICR). Residues 368-388 (KVHGNNGSGNNTGQGETVEQE) form a disordered region.

Belongs to the RING-type zinc finger family. LOG2 subfamily. In terms of assembly, interacts with GDU1. In terms of processing, myristoylated (in vitro). In terms of tissue distribution, expressed in the vascular tissues in both phloem and xylem parenchyma cells.

It is found in the cell membrane. It carries out the reaction S-ubiquitinyl-[E2 ubiquitin-conjugating enzyme]-L-cysteine + [acceptor protein]-L-lysine = [E2 ubiquitin-conjugating enzyme]-L-cysteine + N(6)-ubiquitinyl-[acceptor protein]-L-lysine.. Its pathway is protein modification; protein ubiquitination. Functionally, acts as an E3 ubiquitin-protein ligase, or as part of E3 complex, which accepts ubiquitin from specific E2 ubiquitin-conjugating enzymes and then transfers it to substrates (in vitro). Required for GLUTAMINE DUMPER 1(GDU1)-induced amino acid secretion and for amino acid homeostasis. Ubiquitinates GDU1 (in vitro). The chain is Probable E3 ubiquitin-protein ligase LOG2 (LOG2) from Arabidopsis thaliana (Mouse-ear cress).